We begin with the raw amino-acid sequence, 842 residues long: Leucine--tRNA ligase (842 aa).

A 'HIGH' region motif is present at residues 44-55 (PYPSANGLHVGH). Positions 619 to 623 (KMSKS) match the 'KMSKS' region motif. Lys-622 serves as a coordination point for ATP.

It belongs to the class-I aminoacyl-tRNA synthetase family.

The protein localises to the cytoplasm. It catalyses the reaction tRNA(Leu) + L-leucine + ATP = L-leucyl-tRNA(Leu) + AMP + diphosphate. This chain is Leucine--tRNA ligase, found in Borrelia turicatae (strain 91E135).